We begin with the raw amino-acid sequence, 470 residues long: ATP synthase subunit beta (470 aa).

ATP is bound at residue Gly-158–Thr-165.

This sequence belongs to the ATPase alpha/beta chains family. F-type ATPases have 2 components, CF(1) - the catalytic core - and CF(0) - the membrane proton channel. CF(1) has five subunits: alpha(3), beta(3), gamma(1), delta(1), epsilon(1). CF(0) has three main subunits: a(1), b(2) and c(9-12). The alpha and beta chains form an alternating ring which encloses part of the gamma chain. CF(1) is attached to CF(0) by a central stalk formed by the gamma and epsilon chains, while a peripheral stalk is formed by the delta and b chains.

The protein resides in the cell membrane. The catalysed reaction is ATP + H2O + 4 H(+)(in) = ADP + phosphate + 5 H(+)(out). Functionally, produces ATP from ADP in the presence of a proton gradient across the membrane. The catalytic sites are hosted primarily by the beta subunits. The chain is ATP synthase subunit beta from Alkalihalophilus pseudofirmus (strain ATCC BAA-2126 / JCM 17055 / OF4) (Bacillus pseudofirmus).